Consider the following 314-residue polypeptide: tRNA dimethylallyltransferase (314 aa).

9 to 16 contacts ATP; the sequence is GPTAVGKT. 11–16 serves as a coordination point for substrate; that stretch reads TAVGKT. The interaction with substrate tRNA stretch occupies residues 34–37; the sequence is DSVQ.

Belongs to the IPP transferase family. In terms of assembly, monomer. The cofactor is Mg(2+).

The catalysed reaction is adenosine(37) in tRNA + dimethylallyl diphosphate = N(6)-dimethylallyladenosine(37) in tRNA + diphosphate. Catalyzes the transfer of a dimethylallyl group onto the adenine at position 37 in tRNAs that read codons beginning with uridine, leading to the formation of N6-(dimethylallyl)adenosine (i(6)A). This chain is tRNA dimethylallyltransferase, found in Desulfitobacterium hafniense (strain Y51).